Consider the following 444-residue polypeptide: MKHFEANFDGLVGPTHNYAGLSFGNVASFSNAAQTSNPKAAAKQGLQKAKSLADLGMVQGVLAPQERPDLYTLRRIGFSGSDAEVLQKAAQQAPALLNACCSASSMWTANAATVSPSADTRDGKVHFTPANLVDKLHRSIEPVTTGNILQATFNNDRYFKHHQHLPEHASFGDEGAANHTRLCSEYGHAGVELFVYGQTATNPDAPKPTKYPARQTLEASQAVARLHQLEDESCVFMQQNPNVIDQGVFHNDVISVGNKNVLFYHEQAFLDTETKFDEIRRKMNSDMYFVKVTTEQVSIDDAVRSYLFNTQIITLPSGEMAIIAPTNCQENPAVFAYLNELVTLGTPIKQVRYYDVKQSMQNGGGPACLRLRVAMNEQEVAAVNQNTLMDDGLFTRLNTWVDRHYRDQLTVSDLADPQLIIESRTALDELTQILKLGSVYLFQR.

Residues 19 to 28 (AGLSFGNVAS), Asn110, and 137 to 138 (HR) contribute to the substrate site. Glu174 is an active-site residue. Position 214 (Arg214) interacts with substrate. Residue His250 is part of the active site. Asp252 and Asn362 together coordinate substrate. Residue Cys368 is the Nucleophile of the active site.

The protein belongs to the succinylarginine dihydrolase family. In terms of assembly, homodimer.

It carries out the reaction N(2)-succinyl-L-arginine + 2 H2O + 2 H(+) = N(2)-succinyl-L-ornithine + 2 NH4(+) + CO2. It participates in amino-acid degradation; L-arginine degradation via AST pathway; L-glutamate and succinate from L-arginine: step 2/5. Its function is as follows. Catalyzes the hydrolysis of N(2)-succinylarginine into N(2)-succinylornithine, ammonia and CO(2). The sequence is that of N-succinylarginine dihydrolase from Shewanella frigidimarina (strain NCIMB 400).